The primary structure comprises 262 residues: Nodulation protein J (262 aa).

The ABC transmembrane type-2 domain occupies 33–259 (ASLLGHLAEP…FLSTALLRRR (227 aa)). The next 6 helical transmembrane spans lie at 35–55 (LLGH…GLGV), 60–80 (VGGV…SAMT), 125–145 (AALA…TQWL), 148–168 (LYAL…GMVV), 177–197 (YFIF…GAVF), and 231–251 (VVDV…PFFL).

This sequence belongs to the ABC-2 integral membrane protein family. Lipooligosaccharide exporter (TC 3.A.1.102) subfamily. The complex is composed of two ATP-binding proteins (NodI) and two transmembrane proteins (NodJ).

The protein resides in the cell inner membrane. Its function is as follows. Part of the ABC transporter complex NodIJ involved in the export of the nodulation factors (Nod factors), the bacterial signal molecules that induce symbiosis and subsequent nodulation induction. Nod factors are LCO (lipo-chitin oligosaccharide), a modified beta-1,4-linked N-acetylglucosamine oligosaccharide. This subunit encodes the transporter. The protein is Nodulation protein J (nodJ) of Rhizobium leguminosarum bv. trifolii.